Here is a 218-residue protein sequence, read N- to C-terminus: Ras-related protein Rab-27B (218 aa).

Residue T2 is modified to N-acetylthreonine. G16–T24 provides a ligand contact to GTP. The Effector region signature appears at F38–F46. Residues D74–Q78, N133–D136, and S163–A165 each bind GTP. Residues C123 and C188 are joined by a disulfide bond. 2 S-geranylgeranyl cysteine lipidation sites follow: C216 and C218. A Cysteine methyl ester modification is found at C218.

The protein belongs to the small GTPase superfamily. Rab family. As to quaternary structure, interacts with SYTL2, SYTL4, MYRIP and MLPH. Interacts with RPH3A and RPH3A. Interacts (GDP-bound form preferentially) with DENND10.

The protein localises to the membrane. It is found in the late endosome. It catalyses the reaction GTP + H2O = GDP + phosphate + H(+). With respect to regulation, regulated by guanine nucleotide exchange factors (GEFs) which promote the exchange of bound GDP for free GTP, GTPase activating proteins (GAPs) which increase the GTP hydrolysis activity, and GDP dissociation inhibitors which inhibit the dissociation of the nucleotide from the GTPase. Activated by GEFs such as DENND10. Its function is as follows. Small GTPase which cycles between active GTP-bound and inactive GDP-bound states. In its active state, binds to a variety of effector proteins to regulate homeostasis of late endocytic pathway, including endosomal positioning, maturation and secretion. Plays a role in NTRK2/TRKB axonal anterograde transport by facilitating the association of NTRK2/TRKB with KLC1. May be involved in targeting uroplakins to urothelial apical membranes. This chain is Ras-related protein Rab-27B (Rab27b), found in Rattus norvegicus (Rat).